Here is a 347-residue protein sequence, read N- to C-terminus: Intracellular hyaluronan-binding protein 4 (347 aa).

Disordered regions lie at residues 39-221 (GTEK…PSET) and 298-347 (FGSL…PALA). 4 stretches are compositionally biased toward basic and acidic residues: residues 61-71 (VKKESQRDRKT), 83-107 (PGHE…DAEK), 116-125 (RPVDVLDRPA), and 146-174 (DGFD…EKRS). Over residues 199 to 213 (EVTENEETQEAVETD) the composition is skewed to acidic residues. A compositionally biased stretch (gly residues) spans 307–319 (GGRGGRGGRGRGG). Positions 338–347 (DDPEDFPALA) are enriched in acidic residues.

Belongs to the SERBP1-HABP4 family. Associates with ribosomes; promoting ribosome stabilization. Interacts with eef2/eEF2; promoting ribosome stabilization.

It localises to the nucleus. It is found in the cytoplasm. The protein resides in the stress granule. Its subcellular location is the nucleolus. The protein localises to the nucleus speckle. It localises to the cajal body. Functionally, ribosome-binding protein that promotes ribosome hibernation, a process during which ribosomes are stabilized in an inactive state and preserved from proteasomal degradation. Acts via its association with eef2/eEF2 factor at the A-site of the ribosome, promoting ribosome stabilization in an inactive state compatible with storage. Plays a key role in ribosome hibernation in the mature egg by promoting ribosome stabilization. Ribosomes, which are produced in large quantities during oogenesis, are stored and translationally repressed in the egg and early embryo. This Danio rerio (Zebrafish) protein is Intracellular hyaluronan-binding protein 4.